An 87-amino-acid polypeptide reads, in one-letter code: Small ribosomal subunit protein bS20 (87 aa).

The disordered stretch occupies residues 1–20; sequence MANHKSAEKRARQTIKKTER.

This sequence belongs to the bacterial ribosomal protein bS20 family.

Functionally, binds directly to 16S ribosomal RNA. The protein is Small ribosomal subunit protein bS20 of Campylobacter jejuni subsp. jejuni serotype O:2 (strain ATCC 700819 / NCTC 11168).